A 165-amino-acid polypeptide reads, in one-letter code: MAGRLDEDLKDVTLLGNQNTKYLFEYSPEILEVFDNNHPNRDYFVKFNCPEFTSLCPKTGQPDFATIYISYIPEQRMVESKSLKLYLFSFRNHGDFHEDCMNVIMNDLIKLMDPRYIEVWGKFTPRGGISIDPYCNYGRPGTKYEQMADYRMMNHDLYPETIDNR.

Cys-56 functions as the Thioimide intermediate in the catalytic mechanism. The active-site Proton donor is the Asp-63. Residues 78-80 (VES) and 97-98 (HE) each bind substrate.

This sequence belongs to the GTP cyclohydrolase I family. QueF type 1 subfamily.

The protein localises to the cytoplasm. The enzyme catalyses 7-aminomethyl-7-carbaguanine + 2 NADP(+) = 7-cyano-7-deazaguanine + 2 NADPH + 3 H(+). It functions in the pathway tRNA modification; tRNA-queuosine biosynthesis. In terms of biological role, catalyzes the NADPH-dependent reduction of 7-cyano-7-deazaguanine (preQ0) to 7-aminomethyl-7-deazaguanine (preQ1). The polypeptide is NADPH-dependent 7-cyano-7-deazaguanine reductase (Bacillus anthracis (strain A0248)).